Consider the following 68-residue polypeptide: Large ribosomal subunit protein bL31 (68 aa).

The protein belongs to the bacterial ribosomal protein bL31 family. Type A subfamily. As to quaternary structure, part of the 50S ribosomal subunit.

Functionally, binds the 23S rRNA. This is Large ribosomal subunit protein bL31 from Helicobacter hepaticus (strain ATCC 51449 / 3B1).